The primary structure comprises 105 residues: UPF0235 protein RAF_ORF1191 (105 aa).

This sequence belongs to the UPF0235 family.

In Rickettsia africae (strain ESF-5), this protein is UPF0235 protein RAF_ORF1191.